The primary structure comprises 138 residues: Phospholipase A2 EC1 (138 aa).

A signal peptide spans 1-16; it reads MRTLWIVAVWLMSVEG. Cystine bridges form between C42–C131, C44–C60, C59–C111, C65–C138, C66–C104, C73–C97, and C91–C102. The Ca(2+) site is built by Y43, G45, and G47. H63 is an active-site residue. Position 64 (D64) interacts with Ca(2+). The active site involves D105.

The protein belongs to the phospholipase A2 family. Group II subfamily. Ca(2+) serves as cofactor.

It localises to the secreted. It catalyses the reaction a 1,2-diacyl-sn-glycero-3-phosphocholine + H2O = a 1-acyl-sn-glycero-3-phosphocholine + a fatty acid + H(+). The protein is Phospholipase A2 EC1 of Echis coloratus (Carpet viper).